The chain runs to 242 residues: 1-(5-phosphoribosyl)-5-[(5-phosphoribosylamino)methylideneamino] imidazole-4-carboxamide isomerase (242 aa).

Asp10 functions as the Proton acceptor in the catalytic mechanism.

This sequence belongs to the HisA/HisF family.

Its subcellular location is the cytoplasm. It catalyses the reaction 1-(5-phospho-beta-D-ribosyl)-5-[(5-phospho-beta-D-ribosylamino)methylideneamino]imidazole-4-carboxamide = 5-[(5-phospho-1-deoxy-D-ribulos-1-ylimino)methylamino]-1-(5-phospho-beta-D-ribosyl)imidazole-4-carboxamide. The protein operates within amino-acid biosynthesis; L-histidine biosynthesis; L-histidine from 5-phospho-alpha-D-ribose 1-diphosphate: step 4/9. The polypeptide is 1-(5-phosphoribosyl)-5-[(5-phosphoribosylamino)methylideneamino] imidazole-4-carboxamide isomerase (Corynebacterium diphtheriae (strain ATCC 700971 / NCTC 13129 / Biotype gravis)).